The chain runs to 301 residues: Putative ribosomal RNA methyltransferase PB17E12.10c (301 aa).

Residues glycine 87, tryptophan 89, aspartate 107, and aspartate 186 each coordinate S-adenosyl-L-methionine. Lysine 247 (proton acceptor) is an active-site residue.

The protein belongs to the class I-like SAM-binding methyltransferase superfamily. RNA methyltransferase RlmE family.

The enzyme catalyses a uridine in rRNA + S-adenosyl-L-methionine = a 2'-O-methyluridine in rRNA + S-adenosyl-L-homocysteine + H(+). The polypeptide is Putative ribosomal RNA methyltransferase PB17E12.10c (Schizosaccharomyces pombe (strain 972 / ATCC 24843) (Fission yeast)).